Here is a 204-residue protein sequence, read N- to C-terminus: Holliday junction branch migration complex subunit RuvA (204 aa).

The domain I stretch occupies residues 1–64; that stretch reads MIAQLKGSLA…EDAFLLYGFH (64 aa). Residues 65 to 143 are domain II; sequence SESQRKVFNL…ALPMAAPTTA (79 aa). Residues 144 to 154 are flexible linker; it reads IGAATMAANPA. Residues 154 to 204 are domain III; sequence AGLREEVASALLNLGYKPPQVDAALAKLFSAGEITDISVALKGALKLLAPA.

The protein belongs to the RuvA family. In terms of assembly, homotetramer. Forms an RuvA(8)-RuvB(12)-Holliday junction (HJ) complex. HJ DNA is sandwiched between 2 RuvA tetramers; dsDNA enters through RuvA and exits via RuvB. An RuvB hexamer assembles on each DNA strand where it exits the tetramer. Each RuvB hexamer is contacted by two RuvA subunits (via domain III) on 2 adjacent RuvB subunits; this complex drives branch migration. In the full resolvosome a probable DNA-RuvA(4)-RuvB(12)-RuvC(2) complex forms which resolves the HJ.

The protein localises to the cytoplasm. In terms of biological role, the RuvA-RuvB-RuvC complex processes Holliday junction (HJ) DNA during genetic recombination and DNA repair, while the RuvA-RuvB complex plays an important role in the rescue of blocked DNA replication forks via replication fork reversal (RFR). RuvA specifically binds to HJ cruciform DNA, conferring on it an open structure. The RuvB hexamer acts as an ATP-dependent pump, pulling dsDNA into and through the RuvAB complex. HJ branch migration allows RuvC to scan DNA until it finds its consensus sequence, where it cleaves and resolves the cruciform DNA. This chain is Holliday junction branch migration complex subunit RuvA, found in Magnetococcus marinus (strain ATCC BAA-1437 / JCM 17883 / MC-1).